Reading from the N-terminus, the 436-residue chain is UDP-N-acetylmuramate--L-alanine ligase (436 aa).

111 to 117 (GTHGKTS) is an ATP binding site.

The protein belongs to the MurCDEF family.

Its subcellular location is the cytoplasm. The enzyme catalyses UDP-N-acetyl-alpha-D-muramate + L-alanine + ATP = UDP-N-acetyl-alpha-D-muramoyl-L-alanine + ADP + phosphate + H(+). The protein operates within cell wall biogenesis; peptidoglycan biosynthesis. Its function is as follows. Cell wall formation. The chain is UDP-N-acetylmuramate--L-alanine ligase from Pediococcus pentosaceus (strain ATCC 25745 / CCUG 21536 / LMG 10740 / 183-1w).